The sequence spans 468 residues: Cysteine--tRNA ligase (468 aa).

Residue Cys28 coordinates Zn(2+). The short motif at 30-40 (PTVYNYIHIGN) is the 'HIGH' region element. Positions 212, 237, and 241 each coordinate Zn(2+). A 'KMSKS' region motif is present at residues 271–275 (KMSKS). Lys274 contributes to the ATP binding site.

It belongs to the class-I aminoacyl-tRNA synthetase family. Monomer. It depends on Zn(2+) as a cofactor.

Its subcellular location is the cytoplasm. The enzyme catalyses tRNA(Cys) + L-cysteine + ATP = L-cysteinyl-tRNA(Cys) + AMP + diphosphate. In Latilactobacillus sakei subsp. sakei (strain 23K) (Lactobacillus sakei subsp. sakei), this protein is Cysteine--tRNA ligase.